The primary structure comprises 32 residues: Chlorophyll a-b binding protein 2, chloroplastic (32 aa).

Chlorophyll a contacts are provided by Glu19 and His22. Arg24 provides a ligand contact to chlorophyll b.

This sequence belongs to the light-harvesting chlorophyll a/b-binding (LHC) protein family. The LHC complex consists of chlorophyll a-b binding proteins. Requires Binds at least 14 chlorophylls (8 Chl-a and 6 Chl-b) and carotenoids such as lutein and neoxanthin. as cofactor. Photoregulated by reversible phosphorylation of its threonine residues.

It is found in the plastid. It localises to the chloroplast thylakoid membrane. The light-harvesting complex (LHC) functions as a light receptor, it captures and delivers excitation energy to photosystems with which it is closely associated. The polypeptide is Chlorophyll a-b binding protein 2, chloroplastic (Populus euphratica (Euphrates poplar)).